The primary structure comprises 242 residues: Caffeoyl-CoA O-methyltransferase 4 (242 aa).

Substrate is bound at residue K16. S-adenosyl-L-methionine-binding positions include T58, E80, 82 to 83 (GV), S88, D106, and A135. Residue D158 participates in substrate binding. An a divalent metal cation-binding site is contributed by D158. D160 serves as a coordination point for S-adenosyl-L-methionine. A divalent metal cation contacts are provided by D184 and N185. Substrate is bound at residue N189.

The protein belongs to the class I-like SAM-binding methyltransferase superfamily. Cation-dependent O-methyltransferase family. CCoAMT subfamily. Requires Mg(2+) as cofactor. Mostly expressed in the bottom and middle parts of the stems.

The enzyme catalyses (E)-caffeoyl-CoA + S-adenosyl-L-methionine = (E)-feruloyl-CoA + S-adenosyl-L-homocysteine + H(+). It functions in the pathway aromatic compound metabolism; phenylpropanoid biosynthesis. In terms of biological role, methylates caffeoyl-CoA to feruloyl-CoA and 5-hydroxyferuloyl-CoA to sinapoyl-CoA. Plays a role in the synthesis of feruloylated polysaccharides. Involved in the reinforcement of the plant cell wall. Also involved in the responding to wounding or pathogen challenge by the increased formation of cell wall-bound ferulic acid polymers. The sequence is that of Caffeoyl-CoA O-methyltransferase 4 (CCOAOMT4) from Nicotiana tabacum (Common tobacco).